The chain runs to 540 residues: Chaperonin GroEL 2 (540 aa).

ATP-binding positions include threonine 29 to proline 32, aspartate 86 to threonine 90, glycine 413, and aspartate 492. A disordered region spans residues lysine 521–phenylalanine 540. The segment covering proline 530 to phenylalanine 540 has biased composition (gly residues).

This sequence belongs to the chaperonin (HSP60) family. In terms of assembly, forms a cylinder of 14 subunits composed of two heptameric rings stacked back-to-back. Interacts with the co-chaperonin GroES.

Its subcellular location is the secreted. It is found in the capsule. It localises to the cell surface. The protein resides in the cell wall. It catalyses the reaction ATP + H2O + a folded polypeptide = ADP + phosphate + an unfolded polypeptide.. Functionally, together with its co-chaperonin GroES, plays an essential role in assisting protein folding. The GroEL-GroES system forms a nano-cage that allows encapsulation of the non-native substrate proteins and provides a physical environment optimized to promote and accelerate protein folding. In Mycobacterium tuberculosis (strain ATCC 25177 / H37Ra), this protein is Chaperonin GroEL 2.